A 2068-amino-acid chain; its full sequence is Lipoxygenase homology domain-containing protein 1 (2068 aa).

15 consecutive PLAT domains span residues 43 to 160 (KVYE…RDLL), 172 to 287 (NKYE…RDIL), 296 to 412 (ITYI…RQLY), 425 to 540 (YPWS…REMT), 553 to 673 (ARYR…RELL), 684 to 803 (FRYH…VELY), 814 to 934 (VHYE…RELL), 970 to 1088 (TTFS…RDLF), 1101 to 1226 (VPYE…RELV), 1255 to 1373 (VLYS…RLFY), 1422 to 1540 (IPYY…RVFD), 1553 to 1668 (VLYE…CEIC), 1680 to 1798 (TSYT…RDFA), 1811 to 1932 (TTYE…VFEV), and 1949 to 2065 (VKYE…RELF).

Expressed in the inner ear, specifically in hair cells. Higher expression is detected in the cochlea.

The protein localises to the cell projection. The protein resides in the stereocilium. Functionally, required for normal function of hair cells in the inner ear. This chain is Lipoxygenase homology domain-containing protein 1 (Loxhd1), found in Mus musculus (Mouse).